The following is a 434-amino-acid chain: Serine hydroxymethyltransferase (434 aa).

Residues leucine 131 and 135–137 (GHL) contribute to the (6S)-5,6,7,8-tetrahydrofolate site. The residue at position 240 (lysine 240) is an N6-(pyridoxal phosphate)lysine.

It belongs to the SHMT family. As to quaternary structure, homodimer. It depends on pyridoxal 5'-phosphate as a cofactor.

The protein localises to the cytoplasm. It carries out the reaction (6R)-5,10-methylene-5,6,7,8-tetrahydrofolate + glycine + H2O = (6S)-5,6,7,8-tetrahydrofolate + L-serine. It participates in one-carbon metabolism; tetrahydrofolate interconversion. The protein operates within amino-acid biosynthesis; glycine biosynthesis; glycine from L-serine: step 1/1. Catalyzes the reversible interconversion of serine and glycine with tetrahydrofolate (THF) serving as the one-carbon carrier. This reaction serves as the major source of one-carbon groups required for the biosynthesis of purines, thymidylate, methionine, and other important biomolecules. Also exhibits THF-independent aldolase activity toward beta-hydroxyamino acids, producing glycine and aldehydes, via a retro-aldol mechanism. This Gluconobacter oxydans (strain 621H) (Gluconobacter suboxydans) protein is Serine hydroxymethyltransferase.